Consider the following 94-residue polypeptide: Large ribosomal subunit protein uL23 (94 aa).

The protein belongs to the universal ribosomal protein uL23 family. Part of the 50S ribosomal subunit. Contacts protein L29, and trigger factor when it is bound to the ribosome.

In terms of biological role, one of the early assembly proteins it binds 23S rRNA. One of the proteins that surrounds the polypeptide exit tunnel on the outside of the ribosome. Forms the main docking site for trigger factor binding to the ribosome. The sequence is that of Large ribosomal subunit protein uL23 from Latilactobacillus sakei subsp. sakei (strain 23K) (Lactobacillus sakei subsp. sakei).